The following is an 86-amino-acid chain: Colicin-E2 immunity protein (86 aa).

The protein belongs to the colicins ColE2/ColE8/ColE9 and pyocins S1/S2 family.

Its function is as follows. This protein is able to protect a cell, which harbors the plasmid ColE2 encoding colicin E2, against colicin E2. The sequence is that of Colicin-E2 immunity protein (imm) from Escherichia coli.